The chain runs to 1344 residues: Regulatory-associated protein of TOR 1 (1344 aa).

Over residues 28–44 the composition is skewed to basic and acidic residues; it reads CVSSHDDGDSRRKDSEA. Disordered stretches follow at residues 28 to 56 and 771 to 818; these read CVSS…GTTE and ASTD…DSVS. Over residues 785 to 816 the composition is skewed to low complexity; that stretch reads SSSPLGSSGLMQGSPLSDDSSLHSDSGMMHDS. 7 WD repeats span residues 1025–1064, 1070–1111, 1125–1164, 1168–1208, 1214–1255, 1259–1298, and 1307–1344; these read RFET…LLNG, FPDK…GKQK, GARD…LVRS, ESEC…PLVC, QKVE…DTYL, AHRG…LGII, and QKIG…SQAR.

It belongs to the WD repeat RAPTOR family. As to quaternary structure, interacts with TOR, ATPK1 and ML1. Interacts with KIN10. Post-translationally, phosphorylated by KIN10. As to expression, expressed in roots, leaves, flowers and seeds.

It is found in the cytoplasm. Functionally, probable component of the plant TOR kinase pathway that recruits substrates for TOR. Modulates plant cell growth and regulates the activity of ATPK1 kinase in response to osmotic stress. In Arabidopsis thaliana (Mouse-ear cress), this protein is Regulatory-associated protein of TOR 1 (RAPTOR1).